Reading from the N-terminus, the 371-residue chain is S-adenosylmethionine:tRNA ribosyltransferase-isomerase (371 aa).

The protein belongs to the QueA family. As to quaternary structure, monomer.

The protein resides in the cytoplasm. It catalyses the reaction 7-aminomethyl-7-carbaguanosine(34) in tRNA + S-adenosyl-L-methionine = epoxyqueuosine(34) in tRNA + adenine + L-methionine + 2 H(+). Its pathway is tRNA modification; tRNA-queuosine biosynthesis. Its function is as follows. Transfers and isomerizes the ribose moiety from AdoMet to the 7-aminomethyl group of 7-deazaguanine (preQ1-tRNA) to give epoxyqueuosine (oQ-tRNA). The protein is S-adenosylmethionine:tRNA ribosyltransferase-isomerase of Rickettsia akari (strain Hartford).